Consider the following 601-residue polypeptide: DNA ligase (601 aa).

Residue Asp258 participates in ATP binding. Lys260 acts as the N6-AMP-lysine intermediate in catalysis. 6 residues coordinate ATP: Arg265, Arg280, Glu310, Phe350, Arg427, and Lys433.

It belongs to the ATP-dependent DNA ligase family. Mg(2+) serves as cofactor. It depends on Ca(2+) as a cofactor. The cofactor is Mn(2+).

It catalyses the reaction ATP + (deoxyribonucleotide)n-3'-hydroxyl + 5'-phospho-(deoxyribonucleotide)m = (deoxyribonucleotide)n+m + AMP + diphosphate.. Its function is as follows. DNA ligase that seals nicks in double-stranded DNA during DNA replication, DNA recombination and DNA repair. Also has low activity with dATP. Inactive with NAD(+), CTP, GTP, UTP, dCTP, dGTP or dTTP. The polypeptide is DNA ligase (Saccharolobus shibatae (strain ATCC 51178 / DSM 5389 / JCM 8931 / NBRC 15437 / B12) (Sulfolobus shibatae)).